The chain runs to 476 residues: MGIDTGTTATPRTLAEKVWDDHVVVSGGANEPDLIYIDLHLVHEVTSPQAFDGLRLAGRPVRRPDLTLATEDHNVPTVDIDKPIADPVSRTQVETLRRNCAEFGVRLYPMGDAEQGIVHVVGPQLGLTQPGMTVVCGDSHTSTHGAFGALAMGIGTSEVEHVLATQTLPLRPFKTMAVNVDGELPAGVTAKDIILALIAKIGTGGGQGHVIEYRGSAIESLSMEGRMTVCNMSIEAGARAGMIAPDDTTYEFLRDRPHAPKGAQWDAAMRYWQQLRTDPGAVFDTEVYLDAASLSPFVTWGTNPGQGVPLAAAVPDPELMTDDAERQAAEKALAYMDLRPGTPMRDIAVDAVFVGSCTNGRIEDLRVVADVLRGRKVAPGVRMLVVPGSMRVRAQAEAEGLGEVFTAAGAEWRQAGCSMCLGMNPDQLAPGERCAATSNRNFEGRQGKGGRTHLVSPAVAAATAVRGTLSAPADLD.

Residues cysteine 357, cysteine 417, and cysteine 420 each contribute to the [4Fe-4S] cluster site.

Belongs to the aconitase/IPM isomerase family. LeuC type 1 subfamily. In terms of assembly, heterodimer of LeuC and LeuD. Requires [4Fe-4S] cluster as cofactor.

The enzyme catalyses (2R,3S)-3-isopropylmalate = (2S)-2-isopropylmalate. It functions in the pathway amino-acid biosynthesis; L-leucine biosynthesis; L-leucine from 3-methyl-2-oxobutanoate: step 2/4. In terms of biological role, catalyzes the isomerization between 2-isopropylmalate and 3-isopropylmalate, via the formation of 2-isopropylmaleate. In Mycolicibacterium paratuberculosis (strain ATCC BAA-968 / K-10) (Mycobacterium paratuberculosis), this protein is 3-isopropylmalate dehydratase large subunit.